Here is a 334-residue protein sequence, read N- to C-terminus: Fe-S cluster assembly protein DRE2 (334 aa).

The N-terminal SAM-like domain stretch occupies residues 1 to 131 (MASTKTGLVL…ASIKAEPVAV (131 aa)). The linker stretch occupies residues 132–228 (PLRNHKKTTT…EDELVDENEM (97 aa)). Positions 135-229 (NHKKTTTPGT…DELVDENEMR (95 aa)) are disordered. Positions 140–150 (TTPGTTTTAKK) are enriched in low complexity. Composition is skewed to acidic residues over residues 182–192 (DSEDEDEESEG) and 215–227 (DSIE…DENE). [2Fe-2S] cluster-binding residues include C238, C249, C252, and C254. Positions 238–254 (CGKSKTRRRKACKDCTC) are fe-S binding site A. [4Fe-4S] cluster contacts are provided by C297, C300, C308, and C311. Short sequence motifs (cx2C motif) lie at residues 297-300 (CGSC) and 308-311 (CSGC). Positions 297–311 (CGSCTLGDAFRCSGC) are fe-S binding site B.

Belongs to the anamorsin family. In terms of assembly, monomer. Interacts with TAH18. Interacts with MIA40. Requires [2Fe-2S] cluster as cofactor. [4Fe-4S] cluster is required as a cofactor.

Its subcellular location is the cytoplasm. It localises to the mitochondrion intermembrane space. Its function is as follows. Component of the cytosolic iron-sulfur (Fe-S) protein assembly (CIA) machinery required for the maturation of extramitochondrial Fe-S proteins. Part of an electron transfer chain functioning in an early step of cytosolic Fe-S biogenesis, facilitating the de novo assembly of a [4Fe-4S] cluster on the scaffold complex CFD1-NBP35. Electrons are transferred to DRE2 from NADPH via the FAD- and FMN-containing protein TAH18. TAH18-DRE2 are also required for the assembly of the diferric tyrosyl radical cofactor of ribonucleotide reductase (RNR), probably by providing electrons for reduction during radical cofactor maturation in the catalytic small subunit RNR2. This is Fe-S cluster assembly protein DRE2 from Zygosaccharomyces rouxii (strain ATCC 2623 / CBS 732 / NBRC 1130 / NCYC 568 / NRRL Y-229).